The primary structure comprises 308 residues: Probable acetylxylan esterase A (308 aa).

Positions 1–19 are cleaved as a signal peptide; it reads MAPFSFLLTLLLYTLSAGA. N-linked (GlcNAc...) asparagine glycosylation occurs at Asn-141. The active-site Charge relay system is Ser-151. Residue Asn-193 is glycosylated (N-linked (GlcNAc...) asparagine).

The protein belongs to the carbohydrate esterase 1 (CE1) family. AxeA subfamily. As to quaternary structure, monomer.

The protein localises to the secreted. The enzyme catalyses Deacetylation of xylans and xylo-oligosaccharides.. The protein operates within glycan degradation; xylan degradation. Its function is as follows. Acetylxylan esterase involved in the hydrolysis of xylan, a major structural heterogeneous polysaccharide found in plant biomass representing the second most abundant polysaccharide in the biosphere, after cellulose. Degrades acetylated xylans by cleaving acetyl side groups from the hetero-xylan backbone. The protein is Probable acetylxylan esterase A (axeA) of Aspergillus clavatus (strain ATCC 1007 / CBS 513.65 / DSM 816 / NCTC 3887 / NRRL 1 / QM 1276 / 107).